The chain runs to 295 residues: Cyclin-G1 (295 aa).

The protein belongs to the cyclin family. Cyclin G subfamily.

It is found in the nucleus. In terms of biological role, may play a role in growth regulation. Is associated with G2/M phase arrest in response to DNA damage. May be an intermediate by which p53 mediates its role as an inhibitor of cellular proliferation. The protein is Cyclin-G1 (CCNG1) of Sus scrofa (Pig).